The following is a 494-amino-acid chain: uncharacterized protein (494 aa).

VOC domains follow at residues 18-174 and 229-408; these read FIDC…FINR and SLDH…FGIL. Residues His-232, His-349, and Glu-460 each coordinate Fe cation.

This sequence belongs to the 4HPPD family. The cofactor is Fe cation.

May have dioxygenase activity. This is an uncharacterized protein from Dictyostelium discoideum (Social amoeba).